A 505-amino-acid polypeptide reads, in one-letter code: uncharacterized protein (505 aa).

A Radical SAM core domain is found at 193–440 (CTNKKCNLCE…LEIKKKYIGR (248 aa)). Residues Cys-208, Cys-216, and Cys-219 each coordinate [4Fe-4S] cluster. The TRAM domain maps to 435-499 (KKYIGRVLEV…EKYLEGRILK (65 aa)).

Requires [4Fe-4S] cluster as cofactor.

This is an uncharacterized protein from Methanocaldococcus jannaschii (strain ATCC 43067 / DSM 2661 / JAL-1 / JCM 10045 / NBRC 100440) (Methanococcus jannaschii).